Consider the following 249-residue polypeptide: Triosephosphate isomerase (249 aa).

12-14 (NWK) lines the substrate pocket. Histidine 96 acts as the Electrophile in catalysis. Residue glutamate 166 is the Proton acceptor of the active site. Residues glycine 172, serine 211, and 232-233 (GG) each bind substrate.

This sequence belongs to the triosephosphate isomerase family. In terms of assembly, homodimer.

Its subcellular location is the cytoplasm. The catalysed reaction is D-glyceraldehyde 3-phosphate = dihydroxyacetone phosphate. It functions in the pathway carbohydrate biosynthesis; gluconeogenesis. Its pathway is carbohydrate degradation; glycolysis; D-glyceraldehyde 3-phosphate from glycerone phosphate: step 1/1. Its function is as follows. Involved in the gluconeogenesis. Catalyzes stereospecifically the conversion of dihydroxyacetone phosphate (DHAP) to D-glyceraldehyde-3-phosphate (G3P). In Xanthobacter flavus, this protein is Triosephosphate isomerase.